The following is a 1088-amino-acid chain: Serine/threonine-protein kinase 11-interacting protein (1088 aa).

8 LRR repeats span residues 109–130, 132–152, 164–185, 187–209, 210–231, 233–254, 255–276, and 280–301; these read SLRH…RGIY, QLET…LSAC, ALLS…LRLL, ALRF…MDLC, ELHH…GPSG, ALGV…EQLR, NLRH…SPLW, and ELRK…RAAT. 2 disordered regions span residues 335–407 and 437–533; these read GLSP…SPAG and LEPS…QKEV. The segment covering 346 to 367 has biased composition (low complexity); it reads PVGSTPETSGGPDLSDSLSSGG. Residues 375-385 show a composition bias toward basic residues; that stretch reads HKVKSRVRVRR. Phosphoserine occurs at positions 387, 389, and 392. Over residues 447-460 the composition is skewed to low complexity; sequence TPTTSAPSAPPASS. Ser-470 carries the post-translational modification Phosphoserine. Over residues 508–529 the composition is skewed to acidic residues; the sequence is EEGEMVEQGEEEAGEEEEEEQD. Ser-599 carries the post-translational modification Phosphoserine. Disordered regions lie at residues 724–780 and 978–1009; these read TPNR…SPPP and DAAG…PAVR. Residues 733–742 show a composition bias toward polar residues; the sequence is EQSLAPSPSA. Basic and acidic residues predominate over residues 750–759; sequence GHGDHLDRAK. Phosphoserine occurs at positions 761, 773, and 777. Over residues 978 to 994 the composition is skewed to low complexity; that stretch reads DAAGSPAEPSPPAASGE.

The protein belongs to the STK11IP family. In terms of assembly, found in a ternary complex composed of STK11/LKB1, STK11IP and SMAD4. Interacts with STK11/LKB1 and SMAD4.

Its subcellular location is the cytoplasm. Its function is as follows. May regulate STK11/LKB1 function by controlling its subcellular localization. The chain is Serine/threonine-protein kinase 11-interacting protein (STK11IP) from Homo sapiens (Human).